A 397-amino-acid polypeptide reads, in one-letter code: Mannonate dehydratase (397 aa).

The protein belongs to the mannonate dehydratase family. The cofactor is Fe(2+). Mn(2+) serves as cofactor.

It carries out the reaction D-mannonate = 2-dehydro-3-deoxy-D-gluconate + H2O. It participates in carbohydrate metabolism; pentose and glucuronate interconversion. Functionally, catalyzes the dehydration of D-mannonate. The chain is Mannonate dehydratase from Yersinia pestis bv. Antiqua (strain Antiqua).